The chain runs to 45 residues: Cytochrome b559 subunit beta (45 aa).

N-acetylthreonine is present on Thr2. Over 2–17 (TSNTPNQEPVSYPIFT) the chain is Cytoplasmic. Residues 18-42 (VRWVAVHTLAVPTIFFLGAIAAMQF) form a helical membrane-spanning segment. His24 lines the heme pocket. Residues 43 to 45 (IQR) lie on the Lumenal side of the membrane.

As to quaternary structure, heterodimer of an alpha subunit and a beta subunit. PSII is composed of 1 copy each of membrane proteins PsbA, PsbB, PsbC, PsbD, PsbE, PsbF, PsbH, PsbI, PsbJ, PsbK, PsbL, PsbM, PsbT, PsbX, PsbY, PsbZ, Psb30/Ycf12, peripheral proteins PsbO, CyanoQ (PsbQ), PsbU, PsbV and a large number of cofactors. It forms dimeric complexes. Part of a photosystem II (PSII) assembly intermediate complex PSII-I; crystallized from a strain deleted of psbJ, it forms monomeric PSII before addition of the oxygen evolving complex. PSII-I includes 3 assembly factors not found in mature PSII (Psb27, Psb28 and Psb34). The cofactor is heme b.

It is found in the cellular thylakoid membrane. Its function is as follows. This b-type cytochrome is tightly associated with the reaction center of photosystem II (PSII). PSII is a light-driven water:plastoquinone oxidoreductase that uses light energy to abstract electrons from H(2)O, generating O(2) and a proton gradient subsequently used for ATP formation. It consists of a core antenna complex that captures photons, and an electron transfer chain that converts photonic excitation into a charge separation. This chain is Cytochrome b559 subunit beta, found in Thermosynechococcus vestitus (strain NIES-2133 / IAM M-273 / BP-1).